We begin with the raw amino-acid sequence, 336 residues long: Probable aquaglyceroporin-2 (336 aa).

The disordered stretch occupies residues 1-46; that stretch reads MPISTINDSISESSVHKSSIPTKVEMSQNEKYSEAPSEAPTIPPPP. The Cytoplasmic segment spans residues 1-64; the sequence is MPISTINDSI…RENCQDAFSE (64 aa). Positions 9 to 19 are enriched in low complexity; the sequence is SISESSVHKSS. The chain crosses the membrane as a helical span at residues 65-85; it reads FFGTFVLLLFGDGVVAQVVLS. Over 86 to 94 the chain is Extracellular; it reads RGTKGDYQS. A helical transmembrane segment spans residues 95–115; it reads ISWGWGLGVMLGVYVGGKSGG. Residues 116 to 135 lie on the Cytoplasmic side of the membrane; it reads HLNPAVTLANCLFRGHPWRK. Residues 118 to 120 carry the NPA 1 motif; that stretch reads NPA. Residues 136 to 156 form a helical membrane-spanning segment; that stretch reads FPIYAVAQVLGAMAAAAVVYG. Residues 157–195 lie on the Extracellular side of the membrane; that stretch reads NYKSAIDAYEGGPGIRTVIGENATAGVFCTYPAEFMTRT. N178 is a glycosylation site (N-linked (GlcNAc...) asparagine). Residues 196–216 traverse the membrane as a helical segment; the sequence is GMFFSEFIASTILQFVIFAMA. Topologically, residues 217 to 223 are cytoplasmic; that stretch reads DSANIGA. A helical membrane pass occupies residues 224 to 244; the sequence is GPLMPLGLFFLIFGIGACFGW. Residues 245–280 are Extracellular-facing; the sequence is ETGYAINLARDFGPRLVSYMLGYGSEVWSAGGYYFW. The NPA 2 signature appears at 251–253; sequence NLA. The chain crosses the membrane as a helical span at residues 281-301; it reads IPMVAPFFGCAFGGFLYDVFI. Over 302-336 the chain is Cytoplasmic; sequence YTGPSPINTPGMGFGRLVSPRRSTWSNTYNANSPV.

Belongs to the MIP/aquaporin (TC 1.A.8) family.

It localises to the membrane. The catalysed reaction is H2O(in) = H2O(out). It catalyses the reaction glycerol(in) = glycerol(out). Functionally, probable water/glycerol channel that may have redundant functions with FgAQP4. The polypeptide is Probable aquaglyceroporin-2 (Gibberella zeae (strain ATCC MYA-4620 / CBS 123657 / FGSC 9075 / NRRL 31084 / PH-1) (Wheat head blight fungus)).